The following is a 140-amino-acid chain: Pro-Viral epidermal growth factor (140 aa).

Residues 1–18 (MSMKYLMLLFAAMIIRSF) form the signal peptide. Topologically, residues 19–100 (ADSGNAIETT…SENPNTTTSY (82 aa)) are extracellular. Asparagine 34 carries an N-linked (GlcNAc...) asparagine; by host glycan. The 41-residue stretch at 41–81 (AIRLCGPEGDGYCLHGDCIHARDIDGMYCRCSHGYTGIRCQ) folds into the EGF-like domain. Intrachain disulfides connect cysteine 45–cysteine 58, cysteine 53–cysteine 69, and cysteine 71–cysteine 80. Asparagine 95 is a glycosylation site (N-linked (GlcNAc...) asparagine; by host). Residues 101–121 (IPSPGIMLVLVGIIIITCCLL) form a helical membrane-spanning segment. At 122–140 (SVYRFTRRTKLPIQDMVVP) the chain is on the cytoplasmic side.

This sequence belongs to the orthopoxvirus OPG019 family. Viral epidermal growth factor interacts with host EGFR and promotes EGFR dimerization. Cleaved at the cell surface by host ADAM10, thereby releasing the secreted form of VGF.

Its subcellular location is the host membrane. The protein localises to the secreted. Functionally, stimulates cellular proliferation (hyperplasia)and mobility around infected cells to promote rapid and efficient spread of infection. This effect is beneficial for virus replication in vivo, because poxviruses replicate possibly better in proliferating cells than in quiescent cells. Acts by binding host EGFR, inducing its dimerization, autophosphorylation and leading to activation of several cellular pathways regulating cell proliferation or cell survival. The activation by host EGFR of mitogen activated protein kinases (MAPK) and extracellular-signal regulated kinases (ERK) are essential for the positive effect of vaccinia growth factor on poxvirus virulence in vivo. The polypeptide is Pro-Viral epidermal growth factor (OPG019) (Bos taurus (Bovine)).